Here is a 185-residue protein sequence, read N- to C-terminus: Proton-translocating ferredoxin:NAD(+) oxidoreductase complex subunit G (185 aa).

Residues 14 to 34 traverse the membrane as a helical segment; that stretch reads TKNLTITCFISGIIIAAVYYI. T161 is modified (FMN phosphoryl threonine).

The protein belongs to the RnfG family. In terms of assembly, the complex is composed of six subunits: RnfA, RnfB, RnfC, RnfD, RnfE and RnfG. FMN serves as cofactor.

Its subcellular location is the cell membrane. In terms of biological role, part of a membrane-bound complex that couples electron transfer with translocation of ions across the membrane. Couples electron transfer from reduced ferredoxin to NAD(+) with translocation of H(+) out of the cell. Essential for energy conservation during autotrophic growth. Contributes to ATP synthesis during heterotrophic growth. In Clostridium ljungdahlii (strain ATCC 55383 / DSM 13528 / PETC), this protein is Proton-translocating ferredoxin:NAD(+) oxidoreductase complex subunit G.